The following is a 566-amino-acid chain: Putative pentatricopeptide repeat-containing protein At1g28020 (566 aa).

PPR repeat units lie at residues 136-171 (GDSV…GLLL), 172-206 (RPVP…DVEA), 207-242 (DNVT…GIKL), 243-273 (EWHT…TEQL), 279-309 (LKSA…YKSK), 314-348 (DNNG…PLEF), 349-385 (DHRI…RMNK), 468-504 (DYSV…NVDP), and 505-540 (DLIT…GIKL).

This sequence belongs to the PPR family. P subfamily.

This Arabidopsis thaliana (Mouse-ear cress) protein is Putative pentatricopeptide repeat-containing protein At1g28020.